A 128-amino-acid polypeptide reads, in one-letter code: Keratin-associated protein 21-1 (128 aa).

A 51 X 2 AA repeats of G-[YCGS] region spans residues glycine 11–cysteine 117.

Belongs to the KRTAP type 21 family. As to quaternary structure, interacts with hair keratins. In terms of tissue distribution, strong expression in narrowly defined pattern restricted to the lower and middle cortical regions of the hair shaft in both developing and cycling hair. During hair follicle regression (catagen), expression levels decrease until expression is no longer detectable in follicles at resting stage (telogen).

In terms of biological role, in the hair cortex, hair keratin intermediate filaments are embedded in an interfilamentous matrix, consisting of hair keratin-associated proteins (KRTAP), which are essential for the formation of a rigid and resistant hair shaft through their extensive disulfide bond cross-linking with abundant cysteine residues of hair keratins. The matrix proteins include the high-sulfur and high-glycine-tyrosine keratins. The protein is Keratin-associated protein 21-1 (Krtap21-1) of Mus musculus (Mouse).